The sequence spans 408 residues: 1-deoxy-D-xylulose 5-phosphate reductoisomerase (408 aa).

Residues Thr26, Gly27, Ser28, Ile29, and Asn143 each coordinate NADPH. Lys144 is a 1-deoxy-D-xylulose 5-phosphate binding site. Glu145 contacts NADPH. Asp167 serves as a coordination point for Mn(2+). 1-deoxy-D-xylulose 5-phosphate contacts are provided by Ser168, Glu169, Ser193, and His216. Glu169 contacts Mn(2+). Gly222 provides a ligand contact to NADPH. Residues Ser229, Asn234, Lys235, and Glu238 each contribute to the 1-deoxy-D-xylulose 5-phosphate site. Glu238 contacts Mn(2+).

Belongs to the DXR family. Mg(2+) is required as a cofactor. Mn(2+) serves as cofactor.

The enzyme catalyses 2-C-methyl-D-erythritol 4-phosphate + NADP(+) = 1-deoxy-D-xylulose 5-phosphate + NADPH + H(+). The protein operates within isoprenoid biosynthesis; isopentenyl diphosphate biosynthesis via DXP pathway; isopentenyl diphosphate from 1-deoxy-D-xylulose 5-phosphate: step 1/6. Catalyzes the NADPH-dependent rearrangement and reduction of 1-deoxy-D-xylulose-5-phosphate (DXP) to 2-C-methyl-D-erythritol 4-phosphate (MEP). The protein is 1-deoxy-D-xylulose 5-phosphate reductoisomerase of Corynebacterium jeikeium (strain K411).